A 391-amino-acid chain; its full sequence is DNA-directed RNA polymerase subunit Rpo1C (391 aa).

The protein belongs to the RNA polymerase beta' chain family. Part of the RNA polymerase complex.

It is found in the cytoplasm. It carries out the reaction RNA(n) + a ribonucleoside 5'-triphosphate = RNA(n+1) + diphosphate. DNA-dependent RNA polymerase (RNAP) catalyzes the transcription of DNA into RNA using the four ribonucleoside triphosphates as substrates. Forms part of the jaw domain. The protein is DNA-directed RNA polymerase subunit Rpo1C of Thermococcus onnurineus (strain NA1).